The sequence spans 125 residues: Glycine cleavage system H protein (125 aa).

The Lipoyl-binding domain maps to 19–101 (VAVVGISDYA…EGKGWFMKLK (83 aa)). Lysine 60 carries the post-translational modification N6-lipoyllysine.

This sequence belongs to the GcvH family. In terms of assembly, the glycine cleavage system is composed of four proteins: P, T, L and H. (R)-lipoate serves as cofactor.

Functionally, the glycine cleavage system catalyzes the degradation of glycine. The H protein shuttles the methylamine group of glycine from the P protein to the T protein. The chain is Glycine cleavage system H protein from Xanthobacter autotrophicus (strain ATCC BAA-1158 / Py2).